We begin with the raw amino-acid sequence, 147 residues long: Transcriptional repressor NrdR (147 aa).

A zinc finger lies at 3–34 (CLFCRSDDTKVIDSRTSEDGISIRRRRECQLC). Residues 46–136 (LTVIKRNGTS…VYQDFDSLED (91 aa)) enclose the ATP-cone domain.

It belongs to the NrdR family. The cofactor is Zn(2+).

In terms of biological role, negatively regulates transcription of bacterial ribonucleotide reductase nrd genes and operons by binding to NrdR-boxes. The protein is Transcriptional repressor NrdR of Tropheryma whipplei (strain TW08/27) (Whipple's bacillus).